Reading from the N-terminus, the 119-residue chain is Protein yippee-like 3 (119 aa).

Positions 19–116 (RRYSCAHCRA…IELNHMIKDN (98 aa)) constitute a Yippee domain. Residues cysteine 23, cysteine 26, cysteine 79, and cysteine 82 each coordinate Zn(2+).

This sequence belongs to the yippee family. Probably ubiquitinated leading to its degradation by the proteasome.

Its subcellular location is the nucleus. The protein resides in the nucleolus. Functionally, involved in proliferation and apoptosis in myeloid precursor cells. This is Protein yippee-like 3 (YPEL3) from Bos taurus (Bovine).